Here is a 414-residue protein sequence, read N- to C-terminus: L-cysteine:1D-myo-inositol 2-amino-2-deoxy-alpha-D-glucopyranoside ligase (414 aa).

Residue cysteine 44 participates in Zn(2+) binding. L-cysteinyl-5'-AMP contacts are provided by residues 44 to 47 (CGIT), threonine 59, and 82 to 84 (NIT). The short motif at 46–56 (ITPYDSTHLGH) is the 'HIGH' region element. The 'ERGGDP' region motif lies at 188–193 (ERGGDP). An L-cysteinyl-5'-AMP-binding site is contributed by tryptophan 228. Cysteine 232 is a Zn(2+) binding site. 250–252 (GSD) is a binding site for L-cysteinyl-5'-AMP. Histidine 257 is a binding site for Zn(2+). Isoleucine 284 serves as a coordination point for L-cysteinyl-5'-AMP. A 'KMSKS' region motif is present at residues 290-294 (KMSKS).

It belongs to the class-I aminoacyl-tRNA synthetase family. MshC subfamily. As to quaternary structure, monomer. Requires Zn(2+) as cofactor.

The catalysed reaction is 1D-myo-inositol 2-amino-2-deoxy-alpha-D-glucopyranoside + L-cysteine + ATP = 1D-myo-inositol 2-(L-cysteinylamino)-2-deoxy-alpha-D-glucopyranoside + AMP + diphosphate + H(+). Catalyzes the ATP-dependent condensation of GlcN-Ins and L-cysteine to form L-Cys-GlcN-Ins. The protein is L-cysteine:1D-myo-inositol 2-amino-2-deoxy-alpha-D-glucopyranoside ligase (mshC) of Corynebacterium diphtheriae (strain ATCC 700971 / NCTC 13129 / Biotype gravis).